The primary structure comprises 629 residues: 1-deoxy-D-xylulose-5-phosphate synthase (629 aa).

Residues histidine 78 and alanine 119–serine 121 contribute to the thiamine diphosphate site. Residue aspartate 150 coordinates Mg(2+). Thiamine diphosphate contacts are provided by residues glycine 151–alanine 152, asparagine 179, tyrosine 286, and glutamate 368. Residue asparagine 179 participates in Mg(2+) binding.

Belongs to the transketolase family. DXPS subfamily. As to quaternary structure, homodimer. It depends on Mg(2+) as a cofactor. Thiamine diphosphate is required as a cofactor.

It catalyses the reaction D-glyceraldehyde 3-phosphate + pyruvate + H(+) = 1-deoxy-D-xylulose 5-phosphate + CO2. Its pathway is metabolic intermediate biosynthesis; 1-deoxy-D-xylulose 5-phosphate biosynthesis; 1-deoxy-D-xylulose 5-phosphate from D-glyceraldehyde 3-phosphate and pyruvate: step 1/1. Its function is as follows. Catalyzes the acyloin condensation reaction between C atoms 2 and 3 of pyruvate and glyceraldehyde 3-phosphate to yield 1-deoxy-D-xylulose-5-phosphate (DXP). The protein is 1-deoxy-D-xylulose-5-phosphate synthase of Acidovorax sp. (strain JS42).